A 312-amino-acid chain; its full sequence is Taste receptor type 2 member 62 (312 aa).

Topologically, residues 1 to 4 (MPSL) are extracellular. The helical transmembrane segment at 5–27 (PTLIFIAIFCLESLAAMLQNGFL) threads the bilayer. The Cytoplasmic portion of the chain corresponds to 28-39 (VTMLGREWVRCR). The chain crosses the membrane as a helical span at residues 40–62 (MLSTSDMIVACLAASRFCLHGVA). Over 63 to 81 (MANNLLASLDFSRAVPYMN) the chain is Extracellular. Residues 82-104 (IFWDLFNALTLWFTALLAAFYCV) form a helical membrane-spanning segment. At 105–127 (KISSFSHPTFAWLKWRISRLVPK) the chain is on the cytoplasmic side. A helical transmembrane segment spans residues 128–150 (LIKGSLIICGLEVISSATGNILF). Residues 151–182 (GQRKVSLSSYRNETLVYRVQASFQLYFFLYDG) lie on the Extracellular side of the membrane. The N-linked (GlcNAc...) asparagine glycan is linked to asparagine 162. A helical membrane pass occupies residues 183-205 (FVWSIPFLLFLVSTVLLIVSLCW). Residues 206–231 (QLGQMRDLRPGPCDPSTQAYTMALKS) lie on the Cytoplasmic side of the membrane. The helical transmembrane segment at 232-254 (LTFSLIFCTLYFLSLFASALKII) threads the bilayer. Topologically, residues 255–258 (NFQN) are extracellular. Residues 259–281 (HWHWAWEVLIYANICLHSTVLVL) form a helical membrane-spanning segment. At 282–312 (RSPKLKKGLKTWPQLQCPCDAGSQGFGRCWP) the chain is on the cytoplasmic side.

Belongs to the G-protein coupled receptor T2R family.

The protein resides in the membrane. In terms of biological role, receptor that may play a role in the perception of bitterness and is gustducin-linked. May play a role in sensing the chemical composition of the gastrointestinal content. The activity of this receptor may stimulate alpha gustducin, mediate PLC-beta-2 activation and lead to the gating of TRPM5. This is Taste receptor type 2 member 62 (TAS2R62) from Pan paniscus (Pygmy chimpanzee).